A 216-amino-acid polypeptide reads, in one-letter code: uncharacterized protein (216 aa).

The helical transmembrane segment at Val39 to Phe59 threads the bilayer. Positions Phe59–Ile108 form a coiled coil.

The protein localises to the membrane. This is an uncharacterized protein from Aquifex aeolicus (strain VF5).